A 141-amino-acid chain; its full sequence is Large ribosomal subunit protein uL11 (141 aa).

Belongs to the universal ribosomal protein uL11 family. Part of the ribosomal stalk of the 50S ribosomal subunit. Interacts with L10 and the large rRNA to form the base of the stalk. L10 forms an elongated spine to which L12 dimers bind in a sequential fashion forming a multimeric L10(L12)X complex. One or more lysine residues are methylated.

In terms of biological role, forms part of the ribosomal stalk which helps the ribosome interact with GTP-bound translation factors. This chain is Large ribosomal subunit protein uL11, found in Selenomonas ruminantium.